The chain runs to 341 residues: L-threonine 3-dehydrogenase (341 aa).

A Zn(2+)-binding site is contributed by cysteine 38. Catalysis depends on charge relay system residues threonine 40 and histidine 43. Residues histidine 63, glutamate 64, cysteine 93, cysteine 96, cysteine 99, and cysteine 107 each coordinate Zn(2+). NAD(+) contacts are provided by residues isoleucine 175, aspartate 195, arginine 200, 262-264, and 286-287; these read LGI and IY.

The protein belongs to the zinc-containing alcohol dehydrogenase family. As to quaternary structure, homotetramer. Zn(2+) is required as a cofactor.

The protein resides in the cytoplasm. The enzyme catalyses L-threonine + NAD(+) = (2S)-2-amino-3-oxobutanoate + NADH + H(+). It participates in amino-acid degradation; L-threonine degradation via oxydo-reductase pathway; glycine from L-threonine: step 1/2. Its function is as follows. Catalyzes the NAD(+)-dependent oxidation of L-threonine to 2-amino-3-ketobutyrate. This Shewanella sp. (strain MR-7) protein is L-threonine 3-dehydrogenase.